The primary structure comprises 230 residues: Ribonuclease 3 (230 aa).

In terms of domain architecture, RNase III spans 5–125; that stretch reads YSRLYKILGY…IIGAIYLDSD (121 aa). E40 contributes to the Mg(2+) binding site. Residue D44 is part of the active site. Positions 111 and 114 each coordinate Mg(2+). E114 is an active-site residue. Residues 153–223 form the DRBM domain; that stretch reads DSKSKLQEIL…AEKMIQILSQ (71 aa).

The protein belongs to the ribonuclease III family. As to quaternary structure, homodimer. The cofactor is Mg(2+).

Its subcellular location is the cytoplasm. The catalysed reaction is Endonucleolytic cleavage to 5'-phosphomonoester.. Functionally, digests double-stranded RNA. Involved in the processing of primary rRNA transcript to yield the immediate precursors to the large and small rRNAs (23S and 16S). Processes some mRNAs, and tRNAs when they are encoded in the rRNA operon. Processes pre-crRNA and tracrRNA of type II CRISPR loci if present in the organism. This Francisella philomiragia subsp. philomiragia (strain ATCC 25017 / CCUG 19701 / FSC 153 / O#319-036) protein is Ribonuclease 3.